Consider the following 320-residue polypeptide: Mycothiol acetyltransferase (320 aa).

N-acetyltransferase domains lie at 16–141 (RQVR…RSLR) and 152–320 (LQIR…AALA). Glutamate 36 is a 1D-myo-inositol 2-(L-cysteinylamino)-2-deoxy-alpha-D-glucopyranoside binding site. Residues 80-82 (LVV) and 88-93 (RRGIAT) each bind acetyl-CoA. 3 residues coordinate 1D-myo-inositol 2-(L-cysteinylamino)-2-deoxy-alpha-D-glucopyranoside: glutamate 179, lysine 229, and glutamate 239. Acetyl-CoA-binding positions include 243-245 (LGV) and 250-256 (QGRGLGR). Tyrosine 284 serves as a coordination point for 1D-myo-inositol 2-(L-cysteinylamino)-2-deoxy-alpha-D-glucopyranoside. 289–294 (NIAAVR) lines the acetyl-CoA pocket.

Belongs to the acetyltransferase family. MshD subfamily. As to quaternary structure, monomer.

The catalysed reaction is 1D-myo-inositol 2-(L-cysteinylamino)-2-deoxy-alpha-D-glucopyranoside + acetyl-CoA = mycothiol + CoA + H(+). Catalyzes the transfer of acetyl from acetyl-CoA to desacetylmycothiol (Cys-GlcN-Ins) to form mycothiol. The polypeptide is Mycothiol acetyltransferase (Mycobacterium marinum (strain ATCC BAA-535 / M)).